A 289-amino-acid polypeptide reads, in one-letter code: Bifunctional protein FolD (289 aa).

NADP(+)-binding positions include 166–168 (GRS), Ser-191, and Ile-232.

It belongs to the tetrahydrofolate dehydrogenase/cyclohydrolase family. As to quaternary structure, homodimer.

It catalyses the reaction (6R)-5,10-methylene-5,6,7,8-tetrahydrofolate + NADP(+) = (6R)-5,10-methenyltetrahydrofolate + NADPH. It carries out the reaction (6R)-5,10-methenyltetrahydrofolate + H2O = (6R)-10-formyltetrahydrofolate + H(+). Its pathway is one-carbon metabolism; tetrahydrofolate interconversion. In terms of biological role, catalyzes the oxidation of 5,10-methylenetetrahydrofolate to 5,10-methenyltetrahydrofolate and then the hydrolysis of 5,10-methenyltetrahydrofolate to 10-formyltetrahydrofolate. This chain is Bifunctional protein FolD, found in Synechococcus sp. (strain JA-3-3Ab) (Cyanobacteria bacterium Yellowstone A-Prime).